Reading from the N-terminus, the 388-residue chain is Na(+)/H(+) antiporter NhaA (388 aa).

11 helical membrane-spanning segments follow: residues 14–34 (GGII…MGAT), 59–79 (MLLW…GLEV), 95–115 (VFPV…YLAF), 125–145 (GWAI…ALLG), 154–174 (IFLM…IALF), 179–199 (LSIV…LLNL), 219–239 (VLKS…FIPL), 254–274 (ILHP…NAGV), 292–312 (IIAG…WLAL), 328–348 (IMAV…IASL), and 356–376 (ALIN…AVVG).

This sequence belongs to the NhaA Na(+)/H(+) (TC 2.A.33) antiporter family.

It is found in the cell inner membrane. It catalyses the reaction Na(+)(in) + 2 H(+)(out) = Na(+)(out) + 2 H(+)(in). Na(+)/H(+) antiporter that extrudes sodium in exchange for external protons. The chain is Na(+)/H(+) antiporter NhaA from Salmonella arizonae (strain ATCC BAA-731 / CDC346-86 / RSK2980).